Here is a 108-residue protein sequence, read N- to C-terminus: U-scoloptoxin(16)-Sm1a (108 aa).

A signal peptide spans 1–19 (MNLFLVLFVFSFSVSQFFA).

The protein belongs to the scoloptoxin-16 family. In terms of processing, contains 4 disulfide bonds. Expressed by the venom gland.

It is found in the secreted. This is U-scoloptoxin(16)-Sm1a from Scolopendra morsitans (Tanzanian blue ringleg centipede).